The following is a 390-amino-acid chain: S-adenosylmethionine synthase 2 (390 aa).

Residue E9 participates in Mg(2+) binding. An ATP-binding site is contributed by H15. E43 lines the K(+) pocket. L-methionine contacts are provided by E56 and Q99. Residues 167 to 169 (DGK), 235 to 238 (SGRF), D246, 252 to 253 (RK), A269, K273, and K277 contribute to the ATP site. D246 is a binding site for L-methionine. L-methionine is bound at residue K277.

The protein belongs to the AdoMet synthase family. As to quaternary structure, homotetramer. Mn(2+) is required as a cofactor. Requires Mg(2+) as cofactor. The cofactor is Co(2+). It depends on K(+) as a cofactor.

It is found in the cytoplasm. The enzyme catalyses L-methionine + ATP + H2O = S-adenosyl-L-methionine + phosphate + diphosphate. The protein operates within amino-acid biosynthesis; S-adenosyl-L-methionine biosynthesis; S-adenosyl-L-methionine from L-methionine: step 1/1. In terms of biological role, catalyzes the formation of S-adenosylmethionine from methionine and ATP. The reaction comprises two steps that are both catalyzed by the same enzyme: formation of S-adenosylmethionine (AdoMet) and triphosphate, and subsequent hydrolysis of the triphosphate. This chain is S-adenosylmethionine synthase 2 (SAM2), found in Actinidia chinensis var. chinensis (Chinese soft-hair kiwi).